The following is a 728-amino-acid chain: Catalase-peroxidase (728 aa).

Residues 1 to 19 form the signal peptide; it reads MSTEAKCPVTGGATRSSSA. The interval 1–20 is disordered; sequence MSTEAKCPVTGGATRSSSAG. Positions 96–219 form a cross-link, tryptophyl-tyrosyl-methioninium (Trp-Tyr) (with M-245); the sequence is WHAAGTYRIG…LAAVQMGLIY (124 aa). H97 functions as the Proton acceptor in the catalytic mechanism. A cross-link (tryptophyl-tyrosyl-methioninium (Tyr-Met) (with W-96)) is located at residues 219-245; it reads YVNPEGPNGKPDPVAAARDIRETFARM. Heme b is bound at residue H260.

The protein belongs to the peroxidase family. Peroxidase/catalase subfamily. Homodimer or homotetramer. Requires heme b as cofactor. Post-translationally, formation of the three residue Trp-Tyr-Met cross-link is important for the catalase, but not the peroxidase activity of the enzyme.

It carries out the reaction H2O2 + AH2 = A + 2 H2O. It catalyses the reaction 2 H2O2 = O2 + 2 H2O. Bifunctional enzyme with both catalase and broad-spectrum peroxidase activity. This Acidiphilium cryptum (strain JF-5) protein is Catalase-peroxidase.